The chain runs to 67 residues: DNA-directed RNA polymerase subunit omega (67 aa).

It belongs to the RNA polymerase subunit omega family. As to quaternary structure, the RNAP catalytic core consists of 2 alpha, 1 beta, 1 beta' and 1 omega subunit. When a sigma factor is associated with the core the holoenzyme is formed, which can initiate transcription.

It catalyses the reaction RNA(n) + a ribonucleoside 5'-triphosphate = RNA(n+1) + diphosphate. Functionally, promotes RNA polymerase assembly. Latches the N- and C-terminal regions of the beta' subunit thereby facilitating its interaction with the beta and alpha subunits. The polypeptide is DNA-directed RNA polymerase subunit omega (Legionella pneumophila (strain Paris)).